A 124-amino-acid chain; its full sequence is MIQFMTRLNVADNTGAREVGVIKVLNGSKRRYASVGDIVVVSVKDAIPSGTVKKGQVLFAVIVRTKKGAQRRDGTHLAFDDNACVIIKNREDFAPRGTRIFGPVARELRDKGFNRIVSLASEVL.

Belongs to the universal ribosomal protein uL14 family. As to quaternary structure, part of the 50S ribosomal subunit. Forms a cluster with proteins L3 and L19. In the 70S ribosome, L14 and L19 interact and together make contacts with the 16S rRNA in bridges B5 and B8.

Functionally, binds to 23S rRNA. Forms part of two intersubunit bridges in the 70S ribosome. The chain is Large ribosomal subunit protein uL14 from Mycoplasmoides gallisepticum (strain R(low / passage 15 / clone 2)) (Mycoplasma gallisepticum).